The sequence spans 140 residues: Large ribosomal subunit protein uL14 (140 aa).

The protein belongs to the universal ribosomal protein uL14 family. Part of the 50S ribosomal subunit. Forms a cluster with proteins L3 and L24e, part of which may contact the 16S rRNA in 2 intersubunit bridges.

Its function is as follows. Binds to 23S rRNA. Forms part of two intersubunit bridges in the 70S ribosome. This chain is Large ribosomal subunit protein uL14, found in Staphylothermus marinus (strain ATCC 43588 / DSM 3639 / JCM 9404 / F1).